A 232-amino-acid polypeptide reads, in one-letter code: Large ribosomal subunit protein uL1 (232 aa).

This sequence belongs to the universal ribosomal protein uL1 family. In terms of assembly, part of the 50S ribosomal subunit.

Its function is as follows. Binds directly to 23S rRNA. The L1 stalk is quite mobile in the ribosome, and is involved in E site tRNA release. In terms of biological role, protein L1 is also a translational repressor protein, it controls the translation of the L11 operon by binding to its mRNA. The polypeptide is Large ribosomal subunit protein uL1 (Burkholderia ambifaria (strain MC40-6)).